Reading from the N-terminus, the 354-residue chain is Peptide chain release factor 1 (354 aa).

Q230 is subject to N5-methylglutamine.

This sequence belongs to the prokaryotic/mitochondrial release factor family. Post-translationally, methylated by PrmC. Methylation increases the termination efficiency of RF1.

It localises to the cytoplasm. Functionally, peptide chain release factor 1 directs the termination of translation in response to the peptide chain termination codons UAG and UAA. In Rhodospirillum rubrum (strain ATCC 11170 / ATH 1.1.1 / DSM 467 / LMG 4362 / NCIMB 8255 / S1), this protein is Peptide chain release factor 1.